A 146-amino-acid polypeptide reads, in one-letter code: Hemoglobin subunit delta (146 aa).

The region spanning H2 to H146 is the Globin domain. Residues H63 and H92 each coordinate heme b.

The protein belongs to the globin family. In terms of assembly, heterotetramer of two delta chains and two alpha chains. In terms of tissue distribution, red blood cells.

This Ateles fusciceps (Brown-headed spider monkey) protein is Hemoglobin subunit delta (HBD).